The sequence spans 436 residues: Glucose-1-phosphate adenylyltransferase (436 aa).

Alpha-D-glucose 1-phosphate contacts are provided by residues Y112, G178, E193–K194, and S211.

It belongs to the bacterial/plant glucose-1-phosphate adenylyltransferase family. In terms of assembly, homotetramer.

It carries out the reaction alpha-D-glucose 1-phosphate + ATP + H(+) = ADP-alpha-D-glucose + diphosphate. It participates in glycan biosynthesis; glycogen biosynthesis. Involved in the biosynthesis of ADP-glucose, a building block required for the elongation reactions to produce glycogen. Catalyzes the reaction between ATP and alpha-D-glucose 1-phosphate (G1P) to produce pyrophosphate and ADP-Glc. The protein is Glucose-1-phosphate adenylyltransferase of Histophilus somni (strain 129Pt) (Haemophilus somnus).